We begin with the raw amino-acid sequence, 401 residues long: 8-amino-7-oxononanoate synthase (401 aa).

R24 provides a ligand contact to substrate. 111-112 (GF) is a pyridoxal 5'-phosphate binding site. H137 provides a ligand contact to substrate. Pyridoxal 5'-phosphate contacts are provided by S183, H211, and T240. K243 bears the N6-(pyridoxal phosphate)lysine mark. T357 contacts substrate.

It belongs to the class-II pyridoxal-phosphate-dependent aminotransferase family. BioF subfamily. As to quaternary structure, homodimer. Pyridoxal 5'-phosphate serves as cofactor.

The catalysed reaction is 6-carboxyhexanoyl-[ACP] + L-alanine + H(+) = (8S)-8-amino-7-oxononanoate + holo-[ACP] + CO2. The protein operates within cofactor biosynthesis; biotin biosynthesis. Its function is as follows. Catalyzes the decarboxylative condensation of pimeloyl-[acyl-carrier protein] and L-alanine to produce 8-amino-7-oxononanoate (AON), [acyl-carrier protein], and carbon dioxide. This Xanthomonas campestris pv. campestris (strain B100) protein is 8-amino-7-oxononanoate synthase.